The following is a 448-amino-acid chain: Chromosomal replication initiator protein DnaA (448 aa).

The interval 1 to 72 (MPDLQELWNY…VEGAYEFAEI (72 aa)) is domain I, interacts with DnaA modulators. Positions 72–110 (IELTPIFVLPGESDNLTPLEPEEEHVLTKAETPTFLRET) are domain II. The domain III, AAA+ region stretch occupies residues 111-327 (HLNSKYTFDT…GALVRVQAYA (217 aa)). Positions 155, 157, 158, and 159 each coordinate ATP. Residues 328–448 (TMQNAEITTS…ILDLKNTMKS (121 aa)) are domain IV, binds dsDNA.

The protein belongs to the DnaA family. As to quaternary structure, oligomerizes as a right-handed, spiral filament on DNA at oriC.

The protein localises to the cytoplasm. Functionally, plays an essential role in the initiation and regulation of chromosomal replication. ATP-DnaA binds to the origin of replication (oriC) to initiate formation of the DNA replication initiation complex once per cell cycle. Binds the DnaA box (a 9 base pair repeat at the origin) and separates the double-stranded (ds)DNA. Forms a right-handed helical filament on oriC DNA; dsDNA binds to the exterior of the filament while single-stranded (ss)DNA is stabiized in the filament's interior. The ATP-DnaA-oriC complex binds and stabilizes one strand of the AT-rich DNA unwinding element (DUE), permitting loading of DNA polymerase. After initiation quickly degrades to an ADP-DnaA complex that is not apt for DNA replication. Binds acidic phospholipids. In Latilactobacillus sakei subsp. sakei (strain 23K) (Lactobacillus sakei subsp. sakei), this protein is Chromosomal replication initiator protein DnaA.